Consider the following 222-residue polypeptide: N-acetyltransferase 8F1 (222 aa).

The helical transmembrane segment at 53–73 (LVLVSGSWILAVICIFFLLLL) threads the bilayer. The region spanning 69–220 (FLLLLLRLLA…CTIQLKYSFP (152 aa)) is the N-acetyltransferase domain.

It belongs to the camello family.

Its subcellular location is the membrane. Its function is as follows. May play a role in regulation of gastrulation. This is N-acetyltransferase 8F1 from Mus musculus (Mouse).